Consider the following 100-residue polypeptide: Urease subunit gamma (100 aa).

Belongs to the urease gamma subunit family. In terms of assembly, heterotrimer of UreA (gamma), UreB (beta) and UreC (alpha) subunits. Three heterotrimers associate to form the active enzyme.

Its subcellular location is the cytoplasm. The enzyme catalyses urea + 2 H2O + H(+) = hydrogencarbonate + 2 NH4(+). It participates in nitrogen metabolism; urea degradation; CO(2) and NH(3) from urea (urease route): step 1/1. In Halalkalibacterium halodurans (strain ATCC BAA-125 / DSM 18197 / FERM 7344 / JCM 9153 / C-125) (Bacillus halodurans), this protein is Urease subunit gamma.